The following is a 291-amino-acid chain: MSTVAKTNPKSSNKPGPVKSIIAGGVAGAIEISITYPAEFAKTRLQLYRNVEGTKAKLPPFGLEWYRGCSTVIVGNSLKAAVRFFAFDSIKKSLSDEHGHLTGPRTVLAGLGAGVAESVLVLTPFESIKTAIIDDRKRPNPRLKGFLQASRIIVHENGIRGLYRGLAATVARQAANSGVRFTAYNSIKQSLQSRLPPDEKLSTVTTFLVGSVAGIITVYCTQPIDTVKSRMQSLSASKEYKNSIHCAYKILTQDGLLRFWSGATPRLARLILSGGIVFTVYEKVMEILKPF.

Solcar repeat units follow at residues 15–93, 104–190, and 201–287; these read PGPV…IKKS, PRTV…IKQS, and LSTV…VMEI. Helical transmembrane passes span 21 to 41, 70 to 90, 108 to 128, 169 to 189, 201 to 221, and 259 to 280; these read IIAGGVAGAIEISITYPAEFA, STVIVGNSLKAAVRFFAFDSI, LAGLGAGVAESVLVLTPFESI, TVARQAANSGVRFTAYNSIKQ, LSTVTTFLVGSVAGIITVYCT, and FWSGATPRLARLILSGGIVFTV.

This sequence belongs to the mitochondrial carrier (TC 2.A.29) family.

It localises to the mitochondrion inner membrane. This is an uncharacterized protein from Schizosaccharomyces pombe (strain 972 / ATCC 24843) (Fission yeast).